An 81-amino-acid polypeptide reads, in one-letter code: RNA-binding protein Hfq (81 aa).

A Sm domain is found at 10 to 69; sequence DPFLNTLRKEHVPVSIYLVNGIKLQGQVDSFDQYVILLKNTVTQMVYKHAISTIVPGRAV.

The protein belongs to the Hfq family. In terms of assembly, homohexamer.

RNA chaperone that binds small regulatory RNA (sRNAs) and mRNAs to facilitate mRNA translational regulation in response to envelope stress, environmental stress and changes in metabolite concentrations. Also binds with high specificity to tRNAs. The sequence is that of RNA-binding protein Hfq from Methylobacillus flagellatus (strain ATCC 51484 / DSM 6875 / VKM B-1610 / KT).